Consider the following 241-residue polypeptide: Acyl-protein thioesterase 1 (241 aa).

Active-site charge relay system residues include S122, D178, and H211.

Belongs to the AB hydrolase superfamily. AB hydrolase 2 family.

The protein resides in the cytoplasm. The protein localises to the nucleus. The catalysed reaction is S-hexadecanoyl-L-cysteinyl-[protein] + H2O = L-cysteinyl-[protein] + hexadecanoate + H(+). In terms of biological role, hydrolyzes fatty acids from S-acylated cysteine residues in proteins with a strong preference for palmitoylated G-alpha proteins over other acyl substrates. Mediates the deacylation of G-alpha proteins such as GPA1 in vivo, but has weak or no activity toward palmitoylated Ras proteins. Has weak lysophospholipase activity in vitro; however such activity may not exist in vivo. In Aspergillus fumigatus (strain ATCC MYA-4609 / CBS 101355 / FGSC A1100 / Af293) (Neosartorya fumigata), this protein is Acyl-protein thioesterase 1.